A 281-amino-acid chain; its full sequence is 3-hydroxyanthranilate 3,4-dioxygenase (281 aa).

Residues 1-162 are domain A (catalytic); that stretch reads MSGVTAIEIP…SNEFKTGKPG (162 aa). Position 45 (Arg-45) interacts with O2. Positions 49, 55, and 93 each coordinate Fe cation. Glu-55 serves as a coordination point for substrate. Substrate is bound by residues Arg-97 and Glu-107. Residues 163–179 are linker; that stretch reads KGTFACNAPYEARWTDL. Residues 180–281 form a domain B region; sequence PVPINRKEFI…GFAITIRMPA (102 aa).

It belongs to the 3-HAO family. Fe(2+) is required as a cofactor.

The protein localises to the cytoplasm. The catalysed reaction is 3-hydroxyanthranilate + O2 = (2Z,4Z)-2-amino-3-carboxymuconate 6-semialdehyde. Its pathway is cofactor biosynthesis; NAD(+) biosynthesis; quinolinate from L-kynurenine: step 3/3. Its function is as follows. Catalyzes the oxidative ring opening of 3-hydroxyanthranilate to 2-amino-3-carboxymuconate semialdehyde, which spontaneously cyclizes to quinolinate. In Caenorhabditis elegans, this protein is 3-hydroxyanthranilate 3,4-dioxygenase (haao-1).